Reading from the N-terminus, the 475-residue chain is Ammonium transporter Rh type C (475 aa).

At 1-20 (MGCVQSFRNFCDRPKNTNVR) the chain is on the cytoplasmic side. The helical transmembrane segment at 21-41 (ISLPAVCFVWQIAMIILFGVF) threads the bilayer. Over 42–73 (IRYNEEADTHWVEYRKKENISSDIENDFYFRY) the chain is Extracellular. The N-linked (GlcNAc...) asparagine glycan is linked to asparagine 60. A helical transmembrane segment spans residues 74-94 (PSFQDVHVMIFVGFGFLMTFL). The Cytoplasmic segment spans residues 95 to 98 (KRYS). Residues 99 to 119 (FGAVGFNFLIAAFGLQWALLM) traverse the membrane as a helical segment. Residues 120–138 (QGWFHSLDYTDGKIKIGIE) lie on the Extracellular side of the membrane. The helical transmembrane segment at 139-159 (NLINADFCVAGCLIAYGAVLG) threads the bilayer. Residues 160–167 (KVSPVQLM) lie on the Cytoplasmic side of the membrane. A helical membrane pass occupies residues 168–188 (VLTLFGITLFAVEEYIILNLI). At 189 to 193 (HARDA) the chain is on the extracellular side. A helical transmembrane segment spans residues 194–214 (GGSMVIHTFGGYYGLSISWML). Topologically, residues 215–233 (YRPNLEQSSNLQGSVYQSD) are cytoplasmic. The chain crosses the membrane as a helical span at residues 234–254 (VFAMIGTLFLWMFWPSFNSAI). The Extracellular segment spans residues 255–265 (TDHGDGQHRAA). A helical membrane pass occupies residues 266-286 (INTYLALASTVLTTVAISSLF). Residues 287–299 (QKHGKLDMVHIQN) are Cytoplasmic-facing. The helical transmembrane segment at 300 to 320 (STLAGGVAVGTAAEFMLMPYG) threads the bilayer. Serine 321 is a topological domain (extracellular). Residues 322 to 342 (LIVGFCCGIISTLGYIYLTPF) traverse the membrane as a helical segment. Topologically, residues 343 to 357 (MEKYLKIQDTCGIHN) are cytoplasmic. Residues 358 to 378 (LHAMPGLIGGIVGAITAAAAT) traverse the membrane as a helical segment. At 379–410 (ESVYGKEGLVNTFDFVGPFKNMVPTTQGGHQA) the chain is on the extracellular side. Residues 411 to 431 (AGLCVAICFGIGGGIMVGCIL) form a helical membrane-spanning segment. The Cytoplasmic portion of the chain corresponds to 432–475 (RLPIWCDPADDNCFNDEPYWELPEEEEIIPPILHYNNHMVNKDV).

The protein belongs to the ammonium transporter (TC 2.A.49) family. Rh subfamily. In terms of assembly, homotrimer.

It localises to the apical cell membrane. Functions as an ammonia transporter. May play a role in the elimination of ammonia in the gill. The chain is Ammonium transporter Rh type C (rhcg) from Tetraodon nigroviridis (Spotted green pufferfish).